Here is a 213-residue protein sequence, read N- to C-terminus: Nucleoside triphosphate pyrophosphatase (213 aa).

D79 (proton acceptor) is an active-site residue.

Belongs to the Maf family. A divalent metal cation serves as cofactor.

It localises to the cytoplasm. It carries out the reaction a ribonucleoside 5'-triphosphate + H2O = a ribonucleoside 5'-phosphate + diphosphate + H(+). The catalysed reaction is a 2'-deoxyribonucleoside 5'-triphosphate + H2O = a 2'-deoxyribonucleoside 5'-phosphate + diphosphate + H(+). In terms of biological role, nucleoside triphosphate pyrophosphatase. May have a dual role in cell division arrest and in preventing the incorporation of modified nucleotides into cellular nucleic acids. The chain is Nucleoside triphosphate pyrophosphatase from Rhodococcus erythropolis (strain PR4 / NBRC 100887).